We begin with the raw amino-acid sequence, 252 residues long: ATP synthase subunit a (252 aa).

5 helical membrane passes run 33–53, 92–112, 130–150, 196–216, and 217–237; these read GQVF…AFVA, VPFV…GALV, DINT…YAGL, LVVS…VMVL, and GLFT…TYIG.

This sequence belongs to the ATPase A chain family. In terms of assembly, F-type ATPases have 2 components, CF(1) - the catalytic core - and CF(0) - the membrane proton channel. CF(1) has five subunits: alpha(3), beta(3), gamma(1), delta(1), epsilon(1). CF(0) has four main subunits: a, b, b' and c.

The protein localises to the cellular thylakoid membrane. Functionally, key component of the proton channel; it plays a direct role in the translocation of protons across the membrane. This is ATP synthase subunit a from Thermosynechococcus vestitus (strain NIES-2133 / IAM M-273 / BP-1).